The primary structure comprises 494 residues: Alpha-amylase 1 (494 aa).

An N-terminal signal peptide occupies residues 1–18; the sequence is MFLAKSIVCLALLAVANA. An intrachain disulfide couples Cys-46 to Cys-102. Asn-116, Arg-165, and Asp-174 together coordinate Ca(2+). Residues Cys-153 and Cys-167 are joined by a disulfide bond. Residue Arg-202 participates in chloride binding. The active-site Nucleophile is the Asp-204. Ca(2+) is bound at residue His-208. Glu-241 acts as the Proton donor in catalysis. Positions 304 and 343 each coordinate chloride. The disordered stretch occupies residues 350–370; sequence FTDTDQGPPTTDGQNIASPSF. Low complexity predominate over residues 351–363; the sequence is TDTDQGPPTTDGQ. Cystine bridges form between Cys-376–Cys-382 and Cys-448–Cys-460.

Belongs to the glycosyl hydrolase 13 family. As to quaternary structure, monomer. It depends on Ca(2+) as a cofactor. Chloride is required as a cofactor.

The enzyme catalyses Endohydrolysis of (1-&gt;4)-alpha-D-glucosidic linkages in polysaccharides containing three or more (1-&gt;4)-alpha-linked D-glucose units.. The polypeptide is Alpha-amylase 1 (Amy35) (Drosophila ananassae (Fruit fly)).